The following is a 348-amino-acid chain: tRNA-specific 2-thiouridylase MnmA (348 aa).

ATP is bound by residues 8–15 and methionine 34; that span reads LLSGGVDS. Cysteine 105 (nucleophile) is an active-site residue. A disulfide bridge links cysteine 105 with cysteine 197. An ATP-binding site is contributed by glycine 129. The tract at residues 147 to 149 is interaction with tRNA; that stretch reads KDQ. The Cysteine persulfide intermediate role is filled by cysteine 197.

This sequence belongs to the MnmA/TRMU family.

The protein resides in the cytoplasm. The catalysed reaction is S-sulfanyl-L-cysteinyl-[protein] + uridine(34) in tRNA + AH2 + ATP = 2-thiouridine(34) in tRNA + L-cysteinyl-[protein] + A + AMP + diphosphate + H(+). In terms of biological role, catalyzes the 2-thiolation of uridine at the wobble position (U34) of tRNA, leading to the formation of s(2)U34. The chain is tRNA-specific 2-thiouridylase MnmA from Fervidobacterium nodosum (strain ATCC 35602 / DSM 5306 / Rt17-B1).